Reading from the N-terminus, the 381-residue chain is Putative glycosyltransferase EpsD (381 aa).

Belongs to the glycosyltransferase group 1 family. Glycosyltransferase 4 subfamily.

Its function is as follows. May be involved in the production of the exopolysaccharide (EPS) component of the extracellular matrix during biofilm formation. EPS is responsible for the adhesion of chains of cells into bundles. Required for biofilm maintenance. The polypeptide is Putative glycosyltransferase EpsD (epsD) (Bacillus subtilis (strain 168)).